Here is a 105-residue protein sequence, read N- to C-terminus: Toxin ParE2 (105 aa).

This sequence belongs to the RelE toxin family.

Toxic component of a type II toxin-antitoxin (TA) system. Its toxic effect is neutralized by coexpression with cognate antitoxin ParD2. The sequence is that of Toxin ParE2 (parE2) from Mycobacterium tuberculosis (strain CDC 1551 / Oshkosh).